A 244-amino-acid polypeptide reads, in one-letter code: MSEIIYGIHAVKALLERDPQRFLEVFILKGRDDRRLQPVIAELEAQGIVIQVASRQWLDKQAEDAVHQGIVAKVKEGRKYQENDLPAMLDNLEMPFLLILDGVTDPHNLGACLRNADGAGVHAVIVPRDRSAQLNATVKKVACGAAETIPVISVTNLARTMRLLQERNIWIVGTAGEADHTLYQSKLTGPLALVMGAEGEGMRRLTREHCDELISIPMAGSVSSLNVSVATGVCLFEAVRQRGG.

S-adenosyl-L-methionine contacts are provided by Gly196, Ile216, and Leu225.

Belongs to the class IV-like SAM-binding methyltransferase superfamily. RNA methyltransferase TrmH family. RlmB subfamily. As to quaternary structure, homodimer.

Its subcellular location is the cytoplasm. It carries out the reaction guanosine(2251) in 23S rRNA + S-adenosyl-L-methionine = 2'-O-methylguanosine(2251) in 23S rRNA + S-adenosyl-L-homocysteine + H(+). In terms of biological role, specifically methylates the ribose of guanosine 2251 in 23S rRNA. This chain is 23S rRNA (guanosine-2'-O-)-methyltransferase RlmB, found in Pectobacterium atrosepticum (strain SCRI 1043 / ATCC BAA-672) (Erwinia carotovora subsp. atroseptica).